Reading from the N-terminus, the 169-residue chain is Peptide deformylase (169 aa).

Residues cysteine 91 and histidine 133 each contribute to the Fe cation site. Glutamate 134 is an active-site residue. A Fe cation-binding site is contributed by histidine 137.

This sequence belongs to the polypeptide deformylase family. The cofactor is Fe(2+).

It catalyses the reaction N-terminal N-formyl-L-methionyl-[peptide] + H2O = N-terminal L-methionyl-[peptide] + formate. Its function is as follows. Removes the formyl group from the N-terminal Met of newly synthesized proteins. Requires at least a dipeptide for an efficient rate of reaction. N-terminal L-methionine is a prerequisite for activity but the enzyme has broad specificity at other positions. This Aliivibrio salmonicida (strain LFI1238) (Vibrio salmonicida (strain LFI1238)) protein is Peptide deformylase.